The sequence spans 274 residues: Triosephosphate isomerase (274 aa).

31-33 (NWK) contacts substrate. His118 acts as the Electrophile in catalysis. The active-site Proton acceptor is Glu188. Residues Gly194, Ser234, and 255–256 (GG) contribute to the substrate site.

It belongs to the triosephosphate isomerase family. In terms of assembly, homodimer.

It is found in the cytoplasm. It catalyses the reaction D-glyceraldehyde 3-phosphate = dihydroxyacetone phosphate. It participates in carbohydrate biosynthesis; gluconeogenesis. It functions in the pathway carbohydrate degradation; glycolysis; D-glyceraldehyde 3-phosphate from glycerone phosphate: step 1/1. Functionally, involved in the gluconeogenesis. Catalyzes stereospecifically the conversion of dihydroxyacetone phosphate (DHAP) to D-glyceraldehyde-3-phosphate (G3P). This chain is Triosephosphate isomerase, found in Chlamydia trachomatis serovar L2 (strain ATCC VR-902B / DSM 19102 / 434/Bu).